The chain runs to 397 residues: GTPase Obg (397 aa).

The Obg domain occupies 1–159 (MKFVDEAEIR…RMLKLELMLL (159 aa)). The segment at 22 to 44 (SFRREKYVPDGGPDGGDGGDGGS) is disordered. Over residues 33 to 43 (GPDGGDGGDGG) the composition is skewed to gly residues. Positions 160-333 (ADVGLLGMPN…LCIKVMDFIE (174 aa)) constitute an OBG-type G domain. GTP is bound by residues 166-173 (GMPNAGKS), 191-195 (FTTLV), 213-216 (DIPG), 283-286 (NKVD), and 314-316 (SAV). Mg(2+)-binding residues include Ser173 and Thr193. A disordered region spans residues 359 to 389 (TVENYEDDDDFDDDDDDDFDGDDDDDFDGDD). Positions 361-389 (ENYEDDDDFDDDDDDDFDGDDDDDFDGDD) are enriched in acidic residues.

This sequence belongs to the TRAFAC class OBG-HflX-like GTPase superfamily. OBG GTPase family. In terms of assembly, monomer. Mg(2+) serves as cofactor.

It localises to the cytoplasm. An essential GTPase which binds GTP, GDP and possibly (p)ppGpp with moderate affinity, with high nucleotide exchange rates and a fairly low GTP hydrolysis rate. Plays a role in control of the cell cycle, stress response, ribosome biogenesis and in those bacteria that undergo differentiation, in morphogenesis control. The sequence is that of GTPase Obg from Pseudoalteromonas atlantica (strain T6c / ATCC BAA-1087).